Here is a 514-residue protein sequence, read N- to C-terminus: Maturase K (514 aa).

Belongs to the intron maturase 2 family. MatK subfamily.

It localises to the plastid. Its subcellular location is the chloroplast. Its function is as follows. Usually encoded in the trnK tRNA gene intron. Probably assists in splicing its own and other chloroplast group II introns. This is Maturase K from Lepidozamia peroffskyana (Peroffsky's lepidozamia).